Reading from the N-terminus, the 228-residue chain is Urease accessory protein UreF (228 aa).

Belongs to the UreF family. In terms of assembly, ureD, UreF and UreG form a complex that acts as a GTP-hydrolysis-dependent molecular chaperone, activating the urease apoprotein by helping to assemble the nickel containing metallocenter of UreC. The UreE protein probably delivers the nickel.

The protein resides in the cytoplasm. Required for maturation of urease via the functional incorporation of the urease nickel metallocenter. This is Urease accessory protein UreF from Alkalilimnicola ehrlichii (strain ATCC BAA-1101 / DSM 17681 / MLHE-1).